Here is a 240-residue protein sequence, read N- to C-terminus: MALKDKWQQDRIGRQQGVQERQQQVQTTLSLWQQERQNQALDDQESRQGFVTGVQQQTQELLTNISTERLWVAQQQREQLENFIQQLSQEVGEFLQQTIEERSQVAAQLHQQLSEFREDLEYRVTDLLANYQKQRLEARETLLEDLAIFRQTLYREVEEYLGELDILHQQMAAQLQQQLQQSRTERKDAVQKLFEDLGVFRAELQDYHLKLQQTVWGSSHRKPRKAITPQRSIPSRLYSC.

Positions 1-13 (MALKDKWQQDRIG) are enriched in basic and acidic residues. The segment at 1 to 20 (MALKDKWQQDRIGRQQGVQE) is disordered. 5 consecutive repeats follow at residues 18 to 50 (VQER…RQGF), 51 to 83 (VTGV…LENF), 84 to 116 (IQQL…LSEF), 117 to 149 (REDL…LAIF), and 150 to 207 (RQTL…LQDY). Positions 18–207 (VQERQQQVQT…GVFRAELQDY (190 aa)) are 5 X 33 AA tandem repeats.

This sequence belongs to the gas vesicle GvpC family.

The protein localises to the gas vesicle. Functionally, confers stability, involved in shaping gas vesicles, hollow, gas filled proteinaceous nanostructures. During planktonic growth they allow positioning of the organism at a favorable depth for light or nutrient acquisition. The polypeptide is Gas vesicle protein C (Planktothrix agardhii (Oscillatoria agardhii)).